Consider the following 469-residue polypeptide: MTNLTLMNQLTPKQIVEKLDQYIIGQTGAKKSVAVALRNRYRRQLMDESIRDEIIPKNILMIGPTGVGKTEIARRIAKIVRAPFSKVEATKFTEVGYVGRDVESMVRDLVEVSVRLVKEEKMQLVRVKAEKNAEKRLIKLLAPSQKKKQTTSQNPLEALFGGMNQPDESAEEEVDQELKNKRSQIEWRLQNGELDDEIVTVEVKEQQNPMLDMMRGAGMDQMNGMQDALSGMFPAKKKKRKVTVREAKKILFEDEASKLIDADELAAEGIHRAEQMGMIFIDEIDKIASKEGGGNAQVSREGVQRDILPIVEGSQISTKYGTVNTEYILFIAAGAFHMSKPSDLIPELQGRFPIRIELDKLTQEDFYKILTEPDNALIKQYKALLKTEGIDLIFTKEAVERIAEIAFQVNQDSDNIGARRLHTILEKLLEDLLFEAPEINMESIKVTENYVNEKLAPIMQNKDLTQFIL.

ATP is bound by residues Ile-24, 66-71 (GVGKTE), Asp-282, Glu-347, and Arg-419.

The protein belongs to the ClpX chaperone family. HslU subfamily. As to quaternary structure, a double ring-shaped homohexamer of HslV is capped on each side by a ring-shaped HslU homohexamer. The assembly of the HslU/HslV complex is dependent on binding of ATP.

Its subcellular location is the cytoplasm. Its function is as follows. ATPase subunit of a proteasome-like degradation complex; this subunit has chaperone activity. The binding of ATP and its subsequent hydrolysis by HslU are essential for unfolding of protein substrates subsequently hydrolyzed by HslV. HslU recognizes the N-terminal part of its protein substrates and unfolds these before they are guided to HslV for hydrolysis. The chain is ATP-dependent protease ATPase subunit HslU from Listeria monocytogenes serotype 4a (strain HCC23).